Here is a 341-residue protein sequence, read N- to C-terminus: Type II methyltransferase M.NgoPII (341 aa).

Positions 12 to 341 constitute an SAM-dependent MTase C5-type domain; it reads MKIISLFSGC…AAAIKKTLER (330 aa). Cys-84 is a catalytic residue.

The protein belongs to the class I-like SAM-binding methyltransferase superfamily. C5-methyltransferase family.

It catalyses the reaction a 2'-deoxycytidine in DNA + S-adenosyl-L-methionine = a 5-methyl-2'-deoxycytidine in DNA + S-adenosyl-L-homocysteine + H(+). Functionally, a methylase that recognizes the double-stranded sequence 5'-GGCC-3', methylates C-3 on both strands, and protects the DNA from cleavage by the NgoPII endonuclease. This Neisseria gonorrhoeae protein is Type II methyltransferase M.NgoPII (ngoPIIM).